A 248-amino-acid polypeptide reads, in one-letter code: Geranylgeranylglyceryl phosphate synthase (248 aa).

2 residues coordinate Mg(2+): Asp-25 and Ser-50. Residues 170-176 (YLEAGSG), 201-202 (GG), and 223-224 (GT) each bind sn-glycerol 1-phosphate.

It belongs to the GGGP/HepGP synthase family. Group II subfamily. Mg(2+) serves as cofactor.

Its subcellular location is the cytoplasm. The enzyme catalyses sn-glycerol 1-phosphate + (2E,6E,10E)-geranylgeranyl diphosphate = sn-3-O-(geranylgeranyl)glycerol 1-phosphate + diphosphate. The protein operates within membrane lipid metabolism; glycerophospholipid metabolism. In terms of biological role, prenyltransferase that catalyzes the transfer of the geranylgeranyl moiety of geranylgeranyl diphosphate (GGPP) to the C3 hydroxyl of sn-glycerol-1-phosphate (G1P). This reaction is the first ether-bond-formation step in the biosynthesis of archaeal membrane lipids. The chain is Geranylgeranylglyceryl phosphate synthase from Methanococcus aeolicus (strain ATCC BAA-1280 / DSM 17508 / OCM 812 / Nankai-3).